Consider the following 220-residue polypeptide: Putative F-box protein At3g20705 (220 aa).

In terms of domain architecture, F-box spans 1–51; it reads MMMMSNLPNDLVEEILSRVTVTFMRTVRSICKKWNALTKDRSFTNKYIRNI.

This chain is Putative F-box protein At3g20705, found in Arabidopsis thaliana (Mouse-ear cress).